The following is a 292-amino-acid chain: Ribonuclease HIII (292 aa).

Residues 76-292 (TNLIGTDEVG…TQKAIKIAQL (217 aa)) form the RNase H type-2 domain. Residues aspartate 82, glutamate 83, and aspartate 186 each contribute to the a divalent metal cation site.

It belongs to the RNase HII family. RnhC subfamily. Requires Mn(2+) as cofactor. Mg(2+) serves as cofactor.

It localises to the cytoplasm. The enzyme catalyses Endonucleolytic cleavage to 5'-phosphomonoester.. In terms of biological role, endonuclease that specifically degrades the RNA of RNA-DNA hybrids. The polypeptide is Ribonuclease HIII (Lactococcus lactis subsp. lactis (strain IL1403) (Streptococcus lactis)).